A 157-amino-acid polypeptide reads, in one-letter code: Small ribosomal subunit protein uS7 (157 aa).

This sequence belongs to the universal ribosomal protein uS7 family. Part of the 30S ribosomal subunit. Contacts proteins S9 and S11.

Its function is as follows. One of the primary rRNA binding proteins, it binds directly to 16S rRNA where it nucleates assembly of the head domain of the 30S subunit. Is located at the subunit interface close to the decoding center, probably blocks exit of the E-site tRNA. This is Small ribosomal subunit protein uS7 from Polaromonas sp. (strain JS666 / ATCC BAA-500).